A 304-amino-acid chain; its full sequence is UDP-N-acetylenolpyruvoylglucosamine reductase (304 aa).

One can recognise an FAD-binding PCMH-type domain in the interval 33 to 212; the sequence is MGGLADLFLI…KEMMDDLTHK (180 aa). The active site involves arginine 176. The active-site Proton donor is the serine 226. Residue glutamate 296 is part of the active site.

Belongs to the MurB family. It depends on FAD as a cofactor.

The protein localises to the cytoplasm. The catalysed reaction is UDP-N-acetyl-alpha-D-muramate + NADP(+) = UDP-N-acetyl-3-O-(1-carboxyvinyl)-alpha-D-glucosamine + NADPH + H(+). It functions in the pathway cell wall biogenesis; peptidoglycan biosynthesis. In terms of biological role, cell wall formation. This is UDP-N-acetylenolpyruvoylglucosamine reductase from Exiguobacterium sibiricum (strain DSM 17290 / CCUG 55495 / CIP 109462 / JCM 13490 / 255-15).